We begin with the raw amino-acid sequence, 569 residues long: Urease subunit alpha (569 aa).

The Urease domain occupies 131–569; that stretch reads GGVDAHIHFI…VAMAQRYFLF (439 aa). Positions 136, 138, and 219 each coordinate Ni(2+). Lys219 bears the N6-carboxylysine mark. His221 lines the substrate pocket. Ni(2+) is bound by residues His248 and His274. The active-site Proton donor is His322. Ni(2+) is bound at residue Asp362.

This sequence belongs to the metallo-dependent hydrolases superfamily. Urease alpha subunit family. As to quaternary structure, heterotrimer of UreA (gamma), UreB (beta) and UreC (alpha) subunits. Three heterotrimers associate to form the active enzyme. Requires Ni cation as cofactor. Post-translationally, carboxylation allows a single lysine to coordinate two nickel ions.

The protein localises to the cytoplasm. It catalyses the reaction urea + 2 H2O + H(+) = hydrogencarbonate + 2 NH4(+). It participates in nitrogen metabolism; urea degradation; CO(2) and NH(3) from urea (urease route): step 1/1. This Geobacillus kaustophilus (strain HTA426) protein is Urease subunit alpha.